Here is a 68-residue protein sequence, read N- to C-terminus: Conotoxin reg3.14 (68 aa).

Positions 1–22 (MMSKLGVLLTICLLLFPLSVLP) are cleaved as a signal peptide. The propeptide occupies 23–52 (LDGDQPADQPAERMQDISAEQNPWFDPVKR). Disulfide bonds link Cys53–Cys68, Cys54–Cys64, and Cys59–Cys67.

It belongs to the conotoxin M superfamily. Expressed by the venom duct.

It is found in the secreted. The sequence is that of Conotoxin reg3.14 from Conus regius (Crown cone).